The primary structure comprises 213 residues: Orotate phosphoribosyltransferase (213 aa).

Lysine 26 is a 5-phospho-alpha-D-ribose 1-diphosphate binding site. 34 to 35 (FF) contacts orotate. 5-phospho-alpha-D-ribose 1-diphosphate-binding positions include 72 to 73 (YK), arginine 99, lysine 100, lysine 103, histidine 105, and 124 to 132 (DDVITAGTA). Positions 128 and 156 each coordinate orotate.

It belongs to the purine/pyrimidine phosphoribosyltransferase family. PyrE subfamily. In terms of assembly, homodimer. Mg(2+) is required as a cofactor.

It catalyses the reaction orotidine 5'-phosphate + diphosphate = orotate + 5-phospho-alpha-D-ribose 1-diphosphate. The protein operates within pyrimidine metabolism; UMP biosynthesis via de novo pathway; UMP from orotate: step 1/2. Functionally, catalyzes the transfer of a ribosyl phosphate group from 5-phosphoribose 1-diphosphate to orotate, leading to the formation of orotidine monophosphate (OMP). This is Orotate phosphoribosyltransferase from Escherichia coli O157:H7.